The primary structure comprises 452 residues: Elongation factor Tu, mitochondrial (452 aa).

The N-terminal 43 residues, 1 to 43 (MAAATLLRATPRFSGLCASPTPFLQGRLRPLKAPASPFLCRGL), are a transit peptide targeting the mitochondrion. The region spanning 55 to 251 (KPHVNVGTIG…AVDTYIPVPT (197 aa)) is the tr-type G domain. The interval 64–71 (GHVDHGKT) is G1. GTP is bound by residues Asp-67, Gly-69, Lys-70, Thr-71, and Thr-72. Thr-71 contributes to the Mg(2+) binding site. Lys-79 carries the N6-acetyllysine modification. Lys-88 bears the N6-acetyllysine; alternate mark. At Lys-88 the chain carries N6-succinyllysine; alternate. The G2 stretch occupies residues 105 to 109 (GITIN). A G3 region spans residues 126–129 (DCPG). Asn-181, Asp-184, Ser-219, Ala-220, and Leu-221 together coordinate GTP. The interval 181 to 184 (NKAD) is G4. The G5 stretch occupies residues 219-221 (SAL). Residue Lys-234 is modified to N6-succinyllysine. Residue Lys-256 is modified to N6-acetyllysine. Thr-278 carries the post-translational modification Phosphothreonine. An N6-succinyllysine modification is found at Lys-286. Phosphoserine is present on Ser-312. 2 positions are modified to N6-acetyllysine: Lys-361 and Lys-418.

It belongs to the TRAFAC class translation factor GTPase superfamily. Classic translation factor GTPase family. EF-Tu/EF-1A subfamily. In terms of assembly, interacts with NLRX1. Interacts with ATG16L1.

Its subcellular location is the mitochondrion. It carries out the reaction GTP + H2O = GDP + phosphate + H(+). GTP hydrolase that promotes the GTP-dependent binding of aminoacyl-tRNA to the A-site of ribosomes during protein biosynthesis. Also plays a role in the regulation of autophagy and innate immunity. Recruits ATG5-ATG12 and NLRX1 at mitochondria and serves as a checkpoint of the RIGI-MAVS pathway. In turn, inhibits RLR-mediated type I interferon while promoting autophagy. This chain is Elongation factor Tu, mitochondrial (Tufm), found in Mus musculus (Mouse).